A 215-amino-acid polypeptide reads, in one-letter code: N-(5'-phosphoribosyl)anthranilate isomerase (215 aa).

Belongs to the TrpF family.

It catalyses the reaction N-(5-phospho-beta-D-ribosyl)anthranilate = 1-(2-carboxyphenylamino)-1-deoxy-D-ribulose 5-phosphate. It functions in the pathway amino-acid biosynthesis; L-tryptophan biosynthesis; L-tryptophan from chorismate: step 3/5. The polypeptide is N-(5'-phosphoribosyl)anthranilate isomerase (Rippkaea orientalis (strain PCC 8801 / RF-1) (Cyanothece sp. (strain PCC 8801))).